Reading from the N-terminus, the 415-residue chain is Casein kinase I isoform delta (415 aa).

Residues 9–277 enclose the Protein kinase domain; the sequence is YRLGRKIGSG…YLRQLFRNLF (269 aa). ATP contacts are provided by residues 15-23 and K38; that span reads IGSGSFGDI. Catalysis depends on D128, which acts as the Proton acceptor. Basic and acidic residues predominate over residues 301–315; it reads AEDAERERREREERL. Residues 301–415 form a disordered region; it reads AEDAERERRE…SSGLPSTVHR (115 aa). An autoinhibitory region spans residues 317–342; it reads HTRNPAVRGLPSTASGRLRGTQEVTP. A compositionally biased stretch (low complexity) spans 341–352; sequence TPSTPLTPTSHT. Polar residues predominate over residues 380–415; sequence NVSSSDLTSRQDTSRMSTSQIPSRVTSSGLPSTVHR.

The protein belongs to the protein kinase superfamily. In terms of assembly, monomer. Interacts with per1 and per2. Component of the circadian core oscillator. Post-translationally, autophosphorylated on serine and threonine residues. In terms of tissue distribution, detected in retina photoreceptor cells.

Its subcellular location is the cytoplasm. It is found in the nucleus. It catalyses the reaction L-seryl-[protein] + ATP = O-phospho-L-seryl-[protein] + ADP + H(+). The enzyme catalyses L-threonyl-[protein] + ATP = O-phospho-L-threonyl-[protein] + ADP + H(+). It carries out the reaction L-seryl-[tau protein] + ATP = O-phospho-L-seryl-[tau protein] + ADP + H(+). The catalysed reaction is L-threonyl-[tau protein] + ATP = O-phospho-L-threonyl-[tau protein] + ADP + H(+). Exhibits substrate-dependent heparin activation. In terms of biological role, casein kinases are operationally defined by their preferential utilization of acidic proteins such as caseins as substrates. Can phosphorylate a large number of proteins. Central component of the circadian clock. May act as a negative regulator of circadian rhythmicity by phosphorylating per1 and per2, which may lead to their degradation. Participates in wnt signaling. Its function is as follows. Has no kinase activity. This is Casein kinase I isoform delta (csnk1d) from Xenopus laevis (African clawed frog).